Reading from the N-terminus, the 415-residue chain is BTB/POZ and MATH domain-containing protein 6 (415 aa).

The disordered stretch occupies residues 1–33 (MSKLMTRTSGSSSPNTIPDQIESPTSSRSVTQT). The MATH domain maps to 35–169 (NGSHQFVIQG…DDCLKINCTV (135 aa)). Positions 205–271 (SDVTFDVAGE…MYKDSLPGDV (67 aa)) constitute a BTB domain. The disordered stretch occupies residues 385–415 (SSSGGGKSQSVWAQLSNGGETSSRRVRQRTT). Residues 392-405 (SQSVWAQLSNGGET) are compositionally biased toward polar residues.

It belongs to the Tdpoz family. In terms of assembly, heterodimer with BPM1. Interacts with RAP2-4. Interacts with CUL3A. Binds to MYB56 at the promoter of FLOWERING LOCUS T (FT). In terms of tissue distribution, ubiquitous.

The protein localises to the nucleus. It is found in the cytoplasm. It participates in protein modification; protein ubiquitination. Functionally, may act as a substrate-specific adapter of an E3 ubiquitin-protein ligase complex (CUL3-RBX1-BTB) which mediates the ubiquitination and subsequent proteasomal degradation of target proteins. The chain is BTB/POZ and MATH domain-containing protein 6 (BPM6) from Arabidopsis thaliana (Mouse-ear cress).